Consider the following 208-residue polypeptide: Small ribosomal subunit protein uS4B (208 aa).

The S4 RNA-binding domain maps to 95–160 (KRLDNVVFRL…NQVYMAAKQA (66 aa)).

It belongs to the universal ribosomal protein uS4 family. In terms of assembly, part of the 30S ribosomal subunit. Contacts protein S5. The interaction surface between S4 and S5 is involved in control of translational fidelity.

Its function is as follows. One of the primary rRNA binding proteins, it binds directly to 16S rRNA where it nucleates assembly of the body of the 30S subunit. In terms of biological role, with S5 and S12 plays an important role in translational accuracy. This chain is Small ribosomal subunit protein uS4B, found in Bdellovibrio bacteriovorus (strain ATCC 15356 / DSM 50701 / NCIMB 9529 / HD100).